Reading from the N-terminus, the 322-residue chain is Ribosomal RNA small subunit methyltransferase H (322 aa).

S-adenosyl-L-methionine-binding positions include 47 to 49, aspartate 67, phenylalanine 93, aspartate 112, and glutamine 119; that span reads GGH.

This sequence belongs to the methyltransferase superfamily. RsmH family.

The protein localises to the cytoplasm. The catalysed reaction is cytidine(1402) in 16S rRNA + S-adenosyl-L-methionine = N(4)-methylcytidine(1402) in 16S rRNA + S-adenosyl-L-homocysteine + H(+). Functionally, specifically methylates the N4 position of cytidine in position 1402 (C1402) of 16S rRNA. The polypeptide is Ribosomal RNA small subunit methyltransferase H (Stenotrophomonas maltophilia (strain K279a)).